Consider the following 713-residue polypeptide: uncharacterized protein (713 aa).

The chain crosses the membrane as a helical span at residues 686-706 (VWKFNPALYSTITNIFLLIIF).

This sequence belongs to the plectrovirus ORF1 family.

It is found in the host membrane. This is an uncharacterized protein from Spiroplasma melliferum (SpV1).